An 842-amino-acid polypeptide reads, in one-letter code: Protein P (842 aa).

A terminal protein domain (TP) region spans residues 1 to 177 (MPLSYQHFRR…FCGSPYSWEQ (177 aa)). Residues 178-345 (ELHHGAFLDG…YCLTHLVNLL (168 aa)) are spacer. Residues 205–271 (SRPPVGSSIQ…RHAKNIASRP (67 aa)) are disordered. The segment covering 223 to 239 (GPQSQQRPLDGSQQGRS) has biased composition (polar residues). The polymerase/reverse transcriptase domain (RT) stretch occupies residues 346 to 689 (EDWGPCTEHG…YLNLYPVARQ (344 aa)). Positions 356 to 599 (KHHIRIPRTP…YSLNFMGYVI (244 aa)) constitute a Reverse transcriptase domain. Mg(2+) contacts are provided by D428, D550, and D551.

Belongs to the hepadnaviridae P protein family.

It catalyses the reaction DNA(n) + a 2'-deoxyribonucleoside 5'-triphosphate = DNA(n+1) + diphosphate. The enzyme catalyses Endonucleolytic cleavage to 5'-phosphomonoester.. With respect to regulation, activated by host HSP70 and HSP40 in vitro to be able to bind the epsilon loop of the pgRNA. Because deletion of the RNase H region renders the protein partly chaperone-independent, the chaperones may be needed indirectly to relieve occlusion of the RNA-binding site by this domain. Inhibited by several reverse-transcriptase inhibitors: Lamivudine, Adefovir and Entecavir. Functionally, multifunctional enzyme that converts the viral RNA genome into dsDNA in viral cytoplasmic capsids. This enzyme displays a DNA polymerase activity that can copy either DNA or RNA templates, and a ribonuclease H (RNase H) activity that cleaves the RNA strand of RNA-DNA heteroduplexes in a partially processive 3'- to 5'-endonucleasic mode. Neo-synthesized pregenomic RNA (pgRNA) are encapsidated together with the P protein, and reverse-transcribed inside the nucleocapsid. Initiation of reverse-transcription occurs first by binding the epsilon loop on the pgRNA genome, and is initiated by protein priming, thereby the 5'-end of (-)DNA is covalently linked to P protein. Partial (+)DNA is synthesized from the (-)DNA template and generates the relaxed circular DNA (RC-DNA) genome. After budding and infection, the RC-DNA migrates in the nucleus, and is converted into a plasmid-like covalently closed circular DNA (cccDNA). The activity of P protein does not seem to be necessary for cccDNA generation, and is presumably released from (+)DNA by host nuclear DNA repair machinery. The chain is Protein P from Hepatitis B virus genotype E subtype ayw4 (isolate Kou) (HBV-E).